A 394-amino-acid polypeptide reads, in one-letter code: Phosphatidylinositol 4-phosphate 5-kinase-like protein 1 (394 aa).

The region spanning 36-393 (DKQSRLGLFE…RLCQWVEAHT (358 aa)) is the PIPK domain.

As to quaternary structure, heterodimerizes with other type I phosphatidylinositol 4-phosphate 5-kinase.

Its subcellular location is the cytoplasm. It localises to the membrane. It carries out the reaction a 1,2-diacyl-sn-glycero-3-phospho-(1D-myo-inositol 4-phosphate) + ATP = a 1,2-diacyl-sn-glycero-3-phospho-(1D-myo-inositol-4,5-bisphosphate) + ADP + H(+). Functionally, may act as a scaffold to localize and regulate type I PI(4)P 5-kinases to specific compartments within the cell, where they generate PI(4,5)P2 for actin nucleation, signaling and scaffold protein recruitment and conversion to PI(3,4,5)P3. The polypeptide is Phosphatidylinositol 4-phosphate 5-kinase-like protein 1 (PIP5KL1) (Homo sapiens (Human)).